The sequence spans 1156 residues: Reverse gyrase 1 (1156 aa).

Residues 1–38 (MLKVYYTFGCPNCGGPIDDEHLLAGVPCSKCLPGRVEN) form an RG N-terminal-type zinc finger. Positions 10, 13, 28, and 31 each coordinate Zn(2+). ATP contacts are provided by residues glutamine 86 and 103 to 110 (APTGLGKT). The 188-residue stretch at 90–277 (IKRLAKSESF…ALRTLIGFEP (188 aa)) folds into the Helicase ATP-binding domain. Residues 184-187 (DDSD) carry the DEAD box motif. The topoisomerase I stretch occupies residues 570-1156 (INIKTILLIV…VNSLKLDTNV (587 aa)). Positions 574–736 (TILLIVESPT…NIYRIKYHEI (163 aa)) constitute a Toprim domain. Glutamate 580 lines the Mg(2+) pocket. An RG C-terminal-type zinc finger spans residues 655-682 (IYKCYNCGKTFTIKSNTCPYCGSVFISS). Zn(2+) contacts are provided by cysteine 658, cysteine 661, cysteine 672, and cysteine 675. Residue aspartate 705 participates in Mg(2+) binding. Residues 752–1143 (NMNLVKSQIV…DLHKEITQIS (392 aa)) enclose the Topo IA-type catalytic domain. Catalysis depends on tyrosine 895, which acts as the O-(5'-phospho-DNA)-tyrosine intermediate.

The protein in the N-terminal section; belongs to the DEAD box helicase family. DDVD subfamily. This sequence in the C-terminal section; belongs to the type IA topoisomerase family. Monomer. Zn(2+) is required as a cofactor. The cofactor is Mg(2+).

It is found in the cytoplasm. It carries out the reaction ATP + H2O = ADP + phosphate + H(+). In terms of biological role, modifies the topological state of DNA by introducing positive supercoils in an ATP-dependent process, increasing the linking number in steps of +1. Binds to single-stranded DNA, transiently cleaves and then rejoins the ends, introducing a positive supercoil in the process. The scissile phosphodiester is attacked by the catalytic tyrosine of the enzyme, resulting in the formation of a DNA-(5'-phosphotyrosyl)-enzyme intermediate. Probably involved in rewinding DNA strands in regions of the chromosome that have opened up to allow replication, transcription, DNA repair and/or for DNA protection. The chain is Reverse gyrase 1 from Sulfurisphaera tokodaii (strain DSM 16993 / JCM 10545 / NBRC 100140 / 7) (Sulfolobus tokodaii).